The primary structure comprises 227 residues: Lipoprotein-releasing system ATP-binding protein LolD (227 aa).

One can recognise an ABC transporter domain in the interval 6-227 (LVLDDIQKSY…RLDEGVLVSA (222 aa)). 43-50 (APSGAGKS) serves as a coordination point for ATP.

This sequence belongs to the ABC transporter superfamily. Lipoprotein translocase (TC 3.A.1.125) family. As to quaternary structure, the complex is composed of two ATP-binding proteins (LolD) and two transmembrane proteins (LolC and LolE).

Its subcellular location is the cell inner membrane. Its function is as follows. Part of the ABC transporter complex LolCDE involved in the translocation of mature outer membrane-directed lipoproteins, from the inner membrane to the periplasmic chaperone, LolA. Responsible for the formation of the LolA-lipoprotein complex in an ATP-dependent manner. In Jannaschia sp. (strain CCS1), this protein is Lipoprotein-releasing system ATP-binding protein LolD.